A 508-amino-acid chain; its full sequence is UDP-N-acetylmuramoyl-L-alanyl-D-glutamate--2,6-diaminopimelate ligase (508 aa).

S29 contacts UDP-N-acetyl-alpha-D-muramoyl-L-alanyl-D-glutamate. Position 112–118 (112–118) interacts with ATP; it reads GTNGKTS. UDP-N-acetyl-alpha-D-muramoyl-L-alanyl-D-glutamate contacts are provided by residues 159–160, S186, Q192, and R194; that span reads TT. Position 226 is an N6-carboxylysine (K226). Residues R398, 421-424, G473, and E477 contribute to the meso-2,6-diaminopimelate site; that span reads DNPR. The Meso-diaminopimelate recognition motif motif lies at 421–424; sequence DNPR.

It belongs to the MurCDEF family. MurE subfamily. Mg(2+) serves as cofactor. Post-translationally, carboxylation is probably crucial for Mg(2+) binding and, consequently, for the gamma-phosphate positioning of ATP.

The protein localises to the cytoplasm. The enzyme catalyses UDP-N-acetyl-alpha-D-muramoyl-L-alanyl-D-glutamate + meso-2,6-diaminopimelate + ATP = UDP-N-acetyl-alpha-D-muramoyl-L-alanyl-gamma-D-glutamyl-meso-2,6-diaminopimelate + ADP + phosphate + H(+). It functions in the pathway cell wall biogenesis; peptidoglycan biosynthesis. Its function is as follows. Catalyzes the addition of meso-diaminopimelic acid to the nucleotide precursor UDP-N-acetylmuramoyl-L-alanyl-D-glutamate (UMAG) in the biosynthesis of bacterial cell-wall peptidoglycan. This Janthinobacterium sp. (strain Marseille) (Minibacterium massiliensis) protein is UDP-N-acetylmuramoyl-L-alanyl-D-glutamate--2,6-diaminopimelate ligase.